Here is a 161-residue protein sequence, read N- to C-terminus: RNA pyrophosphohydrolase (161 aa).

A Nudix hydrolase domain is found at 12–154 (PYRPGVGMMI…KRKLYQAVVK (143 aa)). The short motif at 46–67 (GGIVPGETPSIAAMREMLEEIG) is the Nudix box element.

It belongs to the Nudix hydrolase family. RppH subfamily. It depends on a divalent metal cation as a cofactor.

Accelerates the degradation of transcripts by removing pyrophosphate from the 5'-end of triphosphorylated RNA, leading to a more labile monophosphorylated state that can stimulate subsequent ribonuclease cleavage. The chain is RNA pyrophosphohydrolase from Rickettsia africae (strain ESF-5).